Consider the following 91-residue polypeptide: Small ribosomal subunit protein uS19 (91 aa).

The protein belongs to the universal ribosomal protein uS19 family.

Protein S19 forms a complex with S13 that binds strongly to the 16S ribosomal RNA. This is Small ribosomal subunit protein uS19 from Azoarcus sp. (strain BH72).